The primary structure comprises 946 residues: Bifunctional glutamine synthetase adenylyltransferase/adenylyl-removing enzyme (946 aa).

The interval 1-440 is adenylyl removase; that stretch reads MKPLSSPLQQ…VFNELIGDDE (440 aa). The interval 449 to 946 is adenylyl transferase; the sequence is SEQWRELWQD…ASWQKWLVEE (498 aa).

It belongs to the GlnE family. Mg(2+) serves as cofactor.

It catalyses the reaction [glutamine synthetase]-O(4)-(5'-adenylyl)-L-tyrosine + phosphate = [glutamine synthetase]-L-tyrosine + ADP. It carries out the reaction [glutamine synthetase]-L-tyrosine + ATP = [glutamine synthetase]-O(4)-(5'-adenylyl)-L-tyrosine + diphosphate. Its function is as follows. Involved in the regulation of glutamine synthetase GlnA, a key enzyme in the process to assimilate ammonia. When cellular nitrogen levels are high, the C-terminal adenylyl transferase (AT) inactivates GlnA by covalent transfer of an adenylyl group from ATP to specific tyrosine residue of GlnA, thus reducing its activity. Conversely, when nitrogen levels are low, the N-terminal adenylyl removase (AR) activates GlnA by removing the adenylyl group by phosphorolysis, increasing its activity. The regulatory region of GlnE binds the signal transduction protein PII (GlnB) which indicates the nitrogen status of the cell. The sequence is that of Bifunctional glutamine synthetase adenylyltransferase/adenylyl-removing enzyme from Shigella flexneri.